The chain runs to 178 residues: Gamma-crystallin S (178 aa).

Ser-2 carries the post-translational modification N-acetylserine. Residues 2-5 form an N-terminal arm region; the sequence is SKAG. Beta/gamma crystallin 'Greek key' domains follow at residues 6-44 and 45-87; these read TKITFFEDKNFQGRHYDSDCDCADFHMYLSRCNSIRVEG and GTWA…RAVH. The tract at residues 88–93 is connecting peptide; the sequence is LSSGGQ. 2 Beta/gamma crystallin 'Greek key' domains span residues 94–134 and 135–177; these read YKLQ…KVLE and GAWI…RRIV.

It belongs to the beta/gamma-crystallin family. Monomer.

Its function is as follows. Crystallins are the dominant structural components of the vertebrate eye lens. The protein is Gamma-crystallin S (CRYGS) of Bos taurus (Bovine).